The chain runs to 408 residues: Histidine--tRNA ligase (408 aa).

Belongs to the class-II aminoacyl-tRNA synthetase family. Homodimer.

It is found in the cytoplasm. It catalyses the reaction tRNA(His) + L-histidine + ATP = L-histidyl-tRNA(His) + AMP + diphosphate + H(+). The protein is Histidine--tRNA ligase of Campylobacter jejuni subsp. jejuni serotype O:23/36 (strain 81-176).